Here is a 421-residue protein sequence, read N- to C-terminus: Gamma-glutamyl phosphate reductase (421 aa).

The protein belongs to the gamma-glutamyl phosphate reductase family.

The protein localises to the cytoplasm. The enzyme catalyses L-glutamate 5-semialdehyde + phosphate + NADP(+) = L-glutamyl 5-phosphate + NADPH + H(+). The protein operates within amino-acid biosynthesis; L-proline biosynthesis; L-glutamate 5-semialdehyde from L-glutamate: step 2/2. In terms of biological role, catalyzes the NADPH-dependent reduction of L-glutamate 5-phosphate into L-glutamate 5-semialdehyde and phosphate. The product spontaneously undergoes cyclization to form 1-pyrroline-5-carboxylate. The chain is Gamma-glutamyl phosphate reductase from Shewanella pealeana (strain ATCC 700345 / ANG-SQ1).